The chain runs to 701 residues: Ribosomal RNA large subunit methyltransferase K/L (701 aa).

A THUMP domain is found at 43–155 (LLYKSLMWSR…NNILHIMLDL (113 aa)).

The protein belongs to the methyltransferase superfamily. RlmKL family.

The protein resides in the cytoplasm. The catalysed reaction is guanosine(2445) in 23S rRNA + S-adenosyl-L-methionine = N(2)-methylguanosine(2445) in 23S rRNA + S-adenosyl-L-homocysteine + H(+). It catalyses the reaction guanosine(2069) in 23S rRNA + S-adenosyl-L-methionine = N(2)-methylguanosine(2069) in 23S rRNA + S-adenosyl-L-homocysteine + H(+). Functionally, specifically methylates the guanine in position 2445 (m2G2445) and the guanine in position 2069 (m7G2069) of 23S rRNA. This chain is Ribosomal RNA large subunit methyltransferase K/L, found in Buchnera aphidicola subsp. Acyrthosiphon pisum (strain APS) (Acyrthosiphon pisum symbiotic bacterium).